We begin with the raw amino-acid sequence, 379 residues long: Nucleosome assembly protein 1;2 (379 aa).

The stretch at 26–80 (VNALKNKLQNLAGQHSDVLENLTPPVRKRVEFLREIQNQYDEMEAKFFEERAALE) forms a coiled coil. Ser-41 bears the Phosphoserine mark. Residues 47–62 (LTPPVRKRVEFLREIQ) carry the Nuclear export signal motif. Positions 222 to 227 (KKKPKK) match the Nuclear localization signal motif. The segment at 298–379 (AVEADDLDIE…GERPPECKQQ (82 aa)) is disordered. Residues 299–342 (VEADDLDIEDDDDEIDEDDDEEDEEDDEDDEEEDDEDDDEEEEA) are compositionally biased toward acidic residues. The span at 347–360 (KSKKKSSAGHKKAG) shows a compositional bias: basic residues. Cys-376 is modified (cysteine methyl ester). Cys-376 carries the S-farnesyl cysteine lipid modification. The propeptide at 377–379 (KQQ) is removed in mature form.

Belongs to the nucleosome assembly protein (NAP) family. In terms of assembly, can form homomeric and heteromeric protein complexes with NAP1;1, NAP1;3 and NAP1;4. Binds histone H2A. Ubiquitous.

Its subcellular location is the nucleus. The protein localises to the cytoplasm. May modulate chromatin structure by regulation of nucleosome assembly/disassembly. May function in nucleotide excision repair (NER). Involved in somatic homologous recombination. This chain is Nucleosome assembly protein 1;2 (NAP1;2), found in Arabidopsis thaliana (Mouse-ear cress).